A 538-amino-acid chain; its full sequence is Chaperonin GroEL (538 aa).

ATP-binding positions include 29-32 (TLGP), 86-90 (DGTTT), Gly-413, 479-481 (DAL), and Asp-495.

The protein belongs to the chaperonin (HSP60) family. As to quaternary structure, forms a cylinder of 14 subunits composed of two heptameric rings stacked back-to-back. Interacts with the co-chaperonin GroES.

The protein resides in the cytoplasm. It carries out the reaction ATP + H2O + a folded polypeptide = ADP + phosphate + an unfolded polypeptide.. Together with its co-chaperonin GroES, plays an essential role in assisting protein folding. The GroEL-GroES system forms a nano-cage that allows encapsulation of the non-native substrate proteins and provides a physical environment optimized to promote and accelerate protein folding. In Fervidobacterium nodosum (strain ATCC 35602 / DSM 5306 / Rt17-B1), this protein is Chaperonin GroEL.